We begin with the raw amino-acid sequence, 129 residues long: Fluoride-specific ion channel FluC (129 aa).

A run of 4 helical transmembrane segments spans residues 5-25 (LTIALFCAGGGLARYYLSGWV), 32-52 (AFPFGTLAVNLIGAYCIGLIM), 60-80 (LIPATLRLGLTVGFMGGLTTF), and 99-119 (AMVNALASVVMCLLCTWLGVI). Na(+)-binding residues include Gly-75 and Thr-78.

This sequence belongs to the fluoride channel Fluc/FEX (TC 1.A.43) family.

It is found in the cell inner membrane. The enzyme catalyses fluoride(in) = fluoride(out). Na(+) is not transported, but it plays an essential structural role and its presence is essential for fluoride channel function. Its function is as follows. Fluoride-specific ion channel. Important for reducing fluoride concentration in the cell, thus reducing its toxicity. In Pelobacter propionicus (strain DSM 2379 / NBRC 103807 / OttBd1), this protein is Fluoride-specific ion channel FluC.